Here is a 466-residue protein sequence, read N- to C-terminus: 3-isopropylmalate dehydratase large subunit (466 aa).

Residues Cys347, Cys407, and Cys410 each coordinate [4Fe-4S] cluster.

The protein belongs to the aconitase/IPM isomerase family. LeuC type 1 subfamily. In terms of assembly, heterodimer of LeuC and LeuD. It depends on [4Fe-4S] cluster as a cofactor.

The catalysed reaction is (2R,3S)-3-isopropylmalate = (2S)-2-isopropylmalate. Its pathway is amino-acid biosynthesis; L-leucine biosynthesis; L-leucine from 3-methyl-2-oxobutanoate: step 2/4. In terms of biological role, catalyzes the isomerization between 2-isopropylmalate and 3-isopropylmalate, via the formation of 2-isopropylmaleate. This chain is 3-isopropylmalate dehydratase large subunit, found in Klebsiella pneumoniae (strain 342).